The following is a 311-amino-acid chain: ATP synthase subunit a (311 aa).

The next 6 membrane-spanning stretches (helical) occupy residues 62 to 82 (AVHV…GFIF), 123 to 143 (IAPM…MDLI), 170 to 190 (DPNA…MFSI), 213 to 233 (LWYL…VALI), 253 to 273 (IFIL…VGGV), and 276 to 296 (WAWA…FMVL).

It belongs to the ATPase A chain family. In terms of assembly, F-type ATPases have 2 components, CF(1) - the catalytic core - and CF(0) - the membrane proton channel. CF(1) has five subunits: alpha(3), beta(3), gamma(1), delta(1), epsilon(1). CF(0) has three main subunits: a(1), b(2) and c(9-12). The alpha and beta chains form an alternating ring which encloses part of the gamma chain. CF(1) is attached to CF(0) by a central stalk formed by the gamma and epsilon chains, while a peripheral stalk is formed by the delta and b chains.

The protein resides in the cell inner membrane. Functionally, key component of the proton channel; it plays a direct role in the translocation of protons across the membrane. This is ATP synthase subunit a from Saccharophagus degradans (strain 2-40 / ATCC 43961 / DSM 17024).